A 465-amino-acid chain; its full sequence is G1/S-specific cyclin CLN2 (465 aa).

It belongs to the cyclin family.

Essential for the control of the cell cycle at the G1/S (start) transition. Interacts with the CDC28 protein kinase to form MPF. This is G1/S-specific cyclin CLN2 (CLN2) from Candida albicans (Yeast).